Consider the following 692-residue polypeptide: Elongation factor G 2 (692 aa).

In terms of domain architecture, tr-type G spans 8 to 283 (EKTRNIGIMA…AVIDYMPSPV (276 aa)). GTP-binding positions include 17–24 (AHIDAGKT), 81–85 (DTPGH), and 135–138 (NKMD).

The protein belongs to the TRAFAC class translation factor GTPase superfamily. Classic translation factor GTPase family. EF-G/EF-2 subfamily.

Its subcellular location is the cytoplasm. Functionally, catalyzes the GTP-dependent ribosomal translocation step during translation elongation. During this step, the ribosome changes from the pre-translocational (PRE) to the post-translocational (POST) state as the newly formed A-site-bound peptidyl-tRNA and P-site-bound deacylated tRNA move to the P and E sites, respectively. Catalyzes the coordinated movement of the two tRNA molecules, the mRNA and conformational changes in the ribosome. The sequence is that of Elongation factor G 2 from Syntrophotalea carbinolica (strain DSM 2380 / NBRC 103641 / GraBd1) (Pelobacter carbinolicus).